Here is a 30-residue protein sequence, read N- to C-terminus: MISDSQIFVALLFALVSAVLAIRLGTDLYQ.

A helical membrane pass occupies residues isoleucine 7–threonine 26.

This sequence belongs to the PsaM family.

It localises to the plastid. The protein localises to the chloroplast thylakoid membrane. This is Photosystem I reaction center subunit XII from Gracilaria tenuistipitata var. liui (Red alga).